A 318-amino-acid chain; its full sequence is Probable dual-specificity RNA methyltransferase RlmN (318 aa).

The active-site Proton acceptor is E63. In terms of domain architecture, Radical SAM core spans 69–299 (HDYGRTVCVS…VSLRRELGAD (231 aa)). The cysteines at positions 76 and 304 are disulfide-linked. [4Fe-4S] cluster is bound by residues C83, C87, and C90. S-adenosyl-L-methionine is bound by residues 130 to 131 (GE), S162, 185 to 187 (SLH), and N261. The active-site S-methylcysteine intermediate is the C304.

Belongs to the radical SAM superfamily. RlmN family. It depends on [4Fe-4S] cluster as a cofactor.

It is found in the cytoplasm. It catalyses the reaction adenosine(2503) in 23S rRNA + 2 reduced [2Fe-2S]-[ferredoxin] + 2 S-adenosyl-L-methionine = 2-methyladenosine(2503) in 23S rRNA + 5'-deoxyadenosine + L-methionine + 2 oxidized [2Fe-2S]-[ferredoxin] + S-adenosyl-L-homocysteine. The enzyme catalyses adenosine(37) in tRNA + 2 reduced [2Fe-2S]-[ferredoxin] + 2 S-adenosyl-L-methionine = 2-methyladenosine(37) in tRNA + 5'-deoxyadenosine + L-methionine + 2 oxidized [2Fe-2S]-[ferredoxin] + S-adenosyl-L-homocysteine. In terms of biological role, specifically methylates position 2 of adenine 2503 in 23S rRNA and position 2 of adenine 37 in tRNAs. In Desulforudis audaxviator (strain MP104C), this protein is Probable dual-specificity RNA methyltransferase RlmN.